The primary structure comprises 350 residues: C5a anaphylatoxin chemotactic receptor 1 (350 aa).

Residues 1-37 lie on the Extracellular side of the membrane; that stretch reads MDSFDYTTPDYGHYDDKDTLDLNTPVDKTSNTLRVPD. Positions 10–18 are required for CHIPS binding; sequence DYGHYDDKD. 2 positions are modified to sulfotyrosine: Y11 and Y14. The interval 21–30 is involved in C5a binding; the sequence is DLNTPVDKTS. A helical transmembrane segment spans residues 38–64; it reads ILALVIFAVVFLVGVLGNALVVWVTAF. Topologically, residues 65-69 are cytoplasmic; the sequence is EAKRT. A helical membrane pass occupies residues 70 to 93; sequence INAIWFLNLAVADFLSCLALPILF. Topologically, residues 94 to 110 are extracellular; it reads TSIVQHHHWPFGGAACS. C109 and C188 are joined by a disulfide. A helical membrane pass occupies residues 111-132; that stretch reads ILPSLILLNMYASILLLATISA. Topologically, residues 133–153 are cytoplasmic; the sequence is DRFLLVFKPIWCQNFRGAGLA. Residues 154-174 form a helical membrane-spanning segment; the sequence is WIACAVAWGLALLLTIPSFLY. Residues 175-200 are Extracellular-facing; the sequence is RVVREEYFPPKVLCGVDYSHDKRRER. The chain crosses the membrane as a helical span at residues 201–226; it reads AVAIVRLVLGFLWPLLTLMICYTFIL. Topologically, residues 227-242 are cytoplasmic; that stretch reads LRTWSRRATRSTKTLK. Residues 243–265 form a helical membrane-spanning segment; that stretch reads VVVAVVASFFIFWLPYQVTGIMM. At 266–282 the chain is on the extracellular side; that stretch reads SFLEPSSPTFRLLKKLD. The chain crosses the membrane as a helical span at residues 283–303; it reads SLCVSFAYINCCINPIIYVVA. At 304–350 the chain is on the cytoplasmic side; that stretch reads GQGFQGRLQKSLPSLLRNVLTEESVVRESKSFARSTVDTMADKTQAV. 6 positions are modified to phosphoserine: S314, S317, S327, S332, S334, and S338.

The protein belongs to the G-protein coupled receptor 1 family. Homodimer. May also form higher-order oligomers. Interacts (when phosphorylated) with ARRB1 and ARRB2; the interaction is associated with internalization of C5aR. Interacts (via N-terminal domain) with S.aureus chemotaxis inhibitory protein (CHIPS); the interaction blocks the receptor and may thus inhibit the immune response. Sulfation plays a critical role in the association of C5aR with C5a, but no significant role in the ability of the receptor to transduce a signal and mobilize calcium in response to a small peptide agonist. Sulfation at Tyr-14 is important for CHIPS binding. Post-translationally, phosphorylated on serine residues in response to C5a binding, resulting in internalization of the receptor and short-term desensitization to C5a.

The protein resides in the cell membrane. It is found in the cytoplasmic vesicle. In terms of biological role, receptor for the chemotactic and inflammatory peptide anaphylatoxin C5a. The ligand interacts with at least two sites on the receptor: a high-affinity site on the extracellular N-terminus, and a second site in the transmembrane region which activates downstream signaling events. Receptor activation stimulates chemotaxis, granule enzyme release, intracellular calcium release and superoxide anion production. The sequence is that of C5a anaphylatoxin chemotactic receptor 1 (C5AR1) from Pan troglodytes (Chimpanzee).